The primary structure comprises 242 residues: Protein MHF1 homolog (242 aa).

A disordered region spans residues 208 to 242 (LKAKEPQSERKRKKGSAKKEDKASSSNAVRITTDL). Polar residues predominate over residues 231-242 (SSSNAVRITTDL).

Belongs to the TAF9 family. CENP-S/MHF1 subfamily.

It localises to the nucleus. In terms of biological role, involved in the promotion of spontaneous somatic homologous recombination (HR) events, which is opposite to the function of FANCM in ordered HR. Only FANCM is essential for replicative repair in the absence of the endonuclease MUS81. Acts in the same pathway as FANCM to restrain class II meiotic crossing over (CO), and acts with FANCM during meiosis to repair interstrand cross-links (ICLs). This common pathway between MHF1 and FANCM is in parallel to the pathway that involves the RECQ4A helicase. The chain is Protein MHF1 homolog from Arabidopsis thaliana (Mouse-ear cress).